The chain runs to 432 residues: Serine--tRNA ligase (432 aa).

235–237 serves as a coordination point for L-serine; that stretch reads TSE. 266–268 contacts ATP; that stretch reads RSE. Glu-289 lines the L-serine pocket. 353–356 is a binding site for ATP; it reads EISS. Ser-388 lines the L-serine pocket.

This sequence belongs to the class-II aminoacyl-tRNA synthetase family. Type-1 seryl-tRNA synthetase subfamily. Homodimer. The tRNA molecule binds across the dimer.

The protein resides in the cytoplasm. It carries out the reaction tRNA(Ser) + L-serine + ATP = L-seryl-tRNA(Ser) + AMP + diphosphate + H(+). It catalyses the reaction tRNA(Sec) + L-serine + ATP = L-seryl-tRNA(Sec) + AMP + diphosphate + H(+). Its pathway is aminoacyl-tRNA biosynthesis; selenocysteinyl-tRNA(Sec) biosynthesis; L-seryl-tRNA(Sec) from L-serine and tRNA(Sec): step 1/1. In terms of biological role, catalyzes the attachment of serine to tRNA(Ser). Is also able to aminoacylate tRNA(Sec) with serine, to form the misacylated tRNA L-seryl-tRNA(Sec), which will be further converted into selenocysteinyl-tRNA(Sec). This is Serine--tRNA ligase from Paraburkholderia phymatum (strain DSM 17167 / CIP 108236 / LMG 21445 / STM815) (Burkholderia phymatum).